A 156-amino-acid chain; its full sequence is MPRGGSPTPRTIPADPIYGSTLVAKLINKIMIGGKKSKAEKIVYEALRIASEQLNEDPIAVLTKAIENTKPLVETRSRRIGGAVYQIPVEVPERRALALALRWIVNGARDRGAGEMEKKLAAELVDAYKGQGYAAKRREEIHRMAEANKAFAHLRW.

Belongs to the universal ribosomal protein uS7 family. As to quaternary structure, part of the 30S ribosomal subunit. Contacts proteins S9 and S11.

In terms of biological role, one of the primary rRNA binding proteins, it binds directly to 16S rRNA where it nucleates assembly of the head domain of the 30S subunit. Is located at the subunit interface close to the decoding center, probably blocks exit of the E-site tRNA. This is Small ribosomal subunit protein uS7 from Coprothermobacter proteolyticus (strain ATCC 35245 / DSM 5265 / OCM 4 / BT).